The sequence spans 409 residues: Serine protease inhibitor 2 (409 aa).

An N-terminal signal peptide occupies residues 1-21; the sequence is MNKLNFVILCLAALLVFDATA. N-linked (GlcNAc...) asparagine glycosylation is found at asparagine 294 and asparagine 324. The Hinge region; required for binding to peptidase motif lies at 356 to 360; it reads LGSEA.

It belongs to the serpin family. Forms a covalent heterodimer with protease CLIPB9; the interaction inhibits CLIPB9 protease activity. Forms a covalent heterodimer with protease CLIPB10; the interaction inhibits CLIPB10 catalytic activity. Interacts with CLIPB4 in the hemolymph of immune-challenged female mosquitoes; the interaction results in CLIPB4 inhibition. In terms of processing, protease CLIPB9 binds to SRPN2 via the hinge region resulting in the cleavage of the reactive bond. This leads to a conformational change in SRPN2 which traps CLIPB9 and distorts its active site, resulting in CLIPB9 inactivation.

It localises to the secreted. Its function is as follows. Serine protease inhibitor that functions in the melanization-mediated immune response. By preventing the activation of phenoloxidases through the inhibiting of serine proteases CLIPB9, CLIPB10 and CLIPB4, negatively regulates melanization in the hemolymph. By preventing melanization, has a detrimental role during P.berghei parasite mediated-infection and invasion of the mosquito midgut. This chain is Serine protease inhibitor 2, found in Anopheles gambiae (African malaria mosquito).